Reading from the N-terminus, the 122-residue chain is Large ribosomal subunit protein bL12 (122 aa).

This sequence belongs to the bacterial ribosomal protein bL12 family. As to quaternary structure, homodimer. Part of the ribosomal stalk of the 50S ribosomal subunit. Forms a multimeric L10(L12)X complex, where L10 forms an elongated spine to which 2 to 4 L12 dimers bind in a sequential fashion. Binds GTP-bound translation factors.

Forms part of the ribosomal stalk which helps the ribosome interact with GTP-bound translation factors. Is thus essential for accurate translation. This chain is Large ribosomal subunit protein bL12, found in Histophilus somni (strain 129Pt) (Haemophilus somnus).